The sequence spans 53 residues: Rubredoxin (53 aa).

The Rubredoxin-like domain occupies 1-53 (MTKYVCTVCGYVYDPEVGDPDNNINPGTSFQDIPEDWVCPLCGVGKDQFEEEA). Positions 6, 9, 39, and 42 each coordinate Fe cation.

Belongs to the rubredoxin family. Requires Fe(3+) as cofactor.

Its function is as follows. Rubredoxin is a small nonheme, iron protein lacking acid-labile sulfide. Its single Fe, chelated to 4 Cys, functions as an electron acceptor and may also stabilize the conformation of the molecule. The protein is Rubredoxin of Acetoanaerobium sticklandii (strain ATCC 12662 / DSM 519 / JCM 1433 / CCUG 9281 / NCIMB 10654 / HF) (Clostridium sticklandii).